The following is a 343-amino-acid chain: Biotin synthase (343 aa).

Residues 36 to 254 form the Radical SAM core domain; it reads NTIQISTLLS…IAVARIMMPK (219 aa). Residues C51, C55, and C58 each contribute to the [4Fe-4S] cluster site. [2Fe-2S] cluster is bound by residues C95, C126, C186, and R258.

It belongs to the radical SAM superfamily. Biotin synthase family. Homodimer. Requires [4Fe-4S] cluster as cofactor. It depends on [2Fe-2S] cluster as a cofactor.

It catalyses the reaction (4R,5S)-dethiobiotin + (sulfur carrier)-SH + 2 reduced [2Fe-2S]-[ferredoxin] + 2 S-adenosyl-L-methionine = (sulfur carrier)-H + biotin + 2 5'-deoxyadenosine + 2 L-methionine + 2 oxidized [2Fe-2S]-[ferredoxin]. Its pathway is cofactor biosynthesis; biotin biosynthesis; biotin from 7,8-diaminononanoate: step 2/2. In terms of biological role, catalyzes the conversion of dethiobiotin (DTB) to biotin by the insertion of a sulfur atom into dethiobiotin via a radical-based mechanism. The chain is Biotin synthase from Buchnera aphidicola subsp. Acyrthosiphon pisum (strain APS) (Acyrthosiphon pisum symbiotic bacterium).